A 641-amino-acid chain; its full sequence is 1-deoxy-D-xylulose-5-phosphate synthase (641 aa).

Residues H71 and 112 to 114 contribute to the thiamine diphosphate site; that span reads SHA. Position 144 (D144) interacts with Mg(2+). Residues 145–146, N173, Y284, and E365 each bind thiamine diphosphate; that span reads GA. N173 serves as a coordination point for Mg(2+).

This sequence belongs to the transketolase family. DXPS subfamily. Homodimer. Mg(2+) serves as cofactor. Requires thiamine diphosphate as cofactor.

It carries out the reaction D-glyceraldehyde 3-phosphate + pyruvate + H(+) = 1-deoxy-D-xylulose 5-phosphate + CO2. It participates in metabolic intermediate biosynthesis; 1-deoxy-D-xylulose 5-phosphate biosynthesis; 1-deoxy-D-xylulose 5-phosphate from D-glyceraldehyde 3-phosphate and pyruvate: step 1/1. Functionally, catalyzes the acyloin condensation reaction between C atoms 2 and 3 of pyruvate and glyceraldehyde 3-phosphate to yield 1-deoxy-D-xylulose-5-phosphate (DXP). In Mycolicibacterium paratuberculosis (strain ATCC BAA-968 / K-10) (Mycobacterium paratuberculosis), this protein is 1-deoxy-D-xylulose-5-phosphate synthase.